The chain runs to 310 residues: Putative methyltransferase mtx subunit H (310 aa).

The protein belongs to the MtrH family. May be part of a complex composed of 3 subunits; MtxA, MtxH and MtxX.

In Methanosarcina barkeri (strain Fusaro / DSM 804), this protein is Putative methyltransferase mtx subunit H (mtxH).